The following is a 37-amino-acid chain: Large ribosomal subunit protein bL36A (37 aa).

Belongs to the bacterial ribosomal protein bL36 family.

The polypeptide is Large ribosomal subunit protein bL36A (Kocuria rhizophila (strain ATCC 9341 / DSM 348 / NBRC 103217 / DC2201)).